The primary structure comprises 183 residues: NADH-quinone oxidoreductase subunit A (183 aa).

3 helical membrane-spanning segments follow: residues 11–31 (IIAF…VPLL), 63–83 (FYLV…LYAW), and 98–118 (VVIF…VGAL). The interval 159 to 183 (TGQIPAQSSGRVKSKTTPALSSEKE) is disordered.

It belongs to the complex I subunit 3 family. In terms of assembly, NDH-1 is composed of 14 different subunits. Subunits NuoA, H, J, K, L, M, N constitute the membrane sector of the complex.

The protein localises to the cell inner membrane. It catalyses the reaction a quinone + NADH + 5 H(+)(in) = a quinol + NAD(+) + 4 H(+)(out). Its function is as follows. NDH-1 shuttles electrons from NADH, via FMN and iron-sulfur (Fe-S) centers, to quinones in the respiratory chain. The immediate electron acceptor for the enzyme in this species is believed to be ubiquinone. Couples the redox reaction to proton translocation (for every two electrons transferred, four hydrogen ions are translocated across the cytoplasmic membrane), and thus conserves the redox energy in a proton gradient. This is NADH-quinone oxidoreductase subunit A from Acinetobacter baumannii (strain ACICU).